Reading from the N-terminus, the 776-residue chain is Disintegrin and metalloproteinase domain-containing protein 7 (776 aa).

The N-terminal stretch at 1–23 (MLPGCIFLMILLILQVKEKVILG) is a signal peptide. Positions 24-176 (VEGQQLVYPK…NYSCTELNFT (153 aa)) are excised as a propeptide. Over 26–669 (GQQLVYPKKL…WEETLNVTNV (644 aa)) the chain is Extracellular. N-linked (GlcNAc...) asparagine glycosylation is found at N84, N167, and N174. In terms of domain architecture, Peptidase M12B spans 199-394 (KYIELFIVAD…YKPTCMLNIP (196 aa)). 4 cysteine pairs are disulfide-bonded: C310–C389, C350–C373, C352–C357, and C460–C480. The Disintegrin domain occupies 402-488 (FQFCGNKKLD…ACPKDQFRVN (87 aa)). N584, N629, and N665 each carry an N-linked (GlcNAc...) asparagine glycan. The helical transmembrane segment at 670–690 (AILIVVLVLVIVGIGVLILLI) threads the bilayer. Over 691 to 776 (RYQKCIKLKQ…GIADPNQSAK (86 aa)) the chain is Cytoplasmic. Residues 757 to 776 (TLKPASKDSRGIADPNQSAK) are disordered.

Interacts with ITM2B in sperm; the interaction increases following capacitation. Interacts with HSPA5 and CANX.

The protein localises to the membrane. Its function is as follows. Required for normal male fertility via maintenance of epithelial cell morphology in the caput epididymis and subsequently correct epididymis lumen structure required for sperm development. Plays a role in sperm motility, flagella morphology and tyrosine phosphorylation during sperm capacitance. Plays a role in normal expression levels of HSPA5, ITM2B and ADAM2 in sperm both prior to and post-capacitation. This is a non catalytic metalloprotease-like protein. This is Disintegrin and metalloproteinase domain-containing protein 7 (ADAM7) from Macaca fascicularis (Crab-eating macaque).